A 235-amino-acid chain; its full sequence is Phosphoribosylaminoimidazole-succinocarboxamide synthase (235 aa).

This sequence belongs to the SAICAR synthetase family.

The enzyme catalyses 5-amino-1-(5-phospho-D-ribosyl)imidazole-4-carboxylate + L-aspartate + ATP = (2S)-2-[5-amino-1-(5-phospho-beta-D-ribosyl)imidazole-4-carboxamido]succinate + ADP + phosphate + 2 H(+). It participates in purine metabolism; IMP biosynthesis via de novo pathway; 5-amino-1-(5-phospho-D-ribosyl)imidazole-4-carboxamide from 5-amino-1-(5-phospho-D-ribosyl)imidazole-4-carboxylate: step 1/2. In Streptococcus pneumoniae serotype 4 (strain ATCC BAA-334 / TIGR4), this protein is Phosphoribosylaminoimidazole-succinocarboxamide synthase (purC).